We begin with the raw amino-acid sequence, 318 residues long: Olfactory receptor 13C2 (318 aa).

The Extracellular portion of the chain corresponds to 1–25; that stretch reads MEWENHTILVEFFLKGLSGHPRLEL. N5 carries N-linked (GlcNAc...) asparagine glycosylation. Residues 26 to 46 traverse the membrane as a helical segment; sequence LFFVLIFIMYVVILLGNGTLI. Over 47–54 the chain is Cytoplasmic; it reads LISILDPH. A helical membrane pass occupies residues 55–75; sequence LHTPMYFFLGNLSFLDICYTT. The Extracellular portion of the chain corresponds to 76-99; that stretch reads TSIPSTLVSFLSERKTISLSGCAV. A disulfide bond links C97 and C189. Residues 100-120 traverse the membrane as a helical segment; sequence QMFLGLAMGTTECVLLGMMAF. Over 121–139 the chain is Cytoplasmic; it reads DRYVAICNPLRYPIIMSKD. A helical membrane pass occupies residues 140–160; it reads AYVPMAAGSWIIGAVNSAVQS. Topologically, residues 161–197 are extracellular; the sequence is VFVVQLPFCRNNIINHFTCEILAVMKLACADISDNEF. The chain crosses the membrane as a helical span at residues 198–217; that stretch reads IMLVATTLFILTPLLLIIVS. The Cytoplasmic portion of the chain corresponds to 218 to 237; the sequence is YTLIIVSIFKISSSEGRSKA. The helical transmembrane segment at 238–258 threads the bilayer; the sequence is SSTCSAHLTVVIIFYGTILFM. Residues 259-277 lie on the Extracellular side of the membrane; that stretch reads YMKPKSKETLNSDDLDATD. Residues 278–298 traverse the membrane as a helical segment; it reads KIISMFYGVMTPMMNPLIYSL. The Cytoplasmic portion of the chain corresponds to 299-318; that stretch reads RNKDVKEAVKHLLNRRFFSK.

The protein belongs to the G-protein coupled receptor 1 family.

It localises to the cell membrane. Odorant receptor. This chain is Olfactory receptor 13C2 (OR13C2), found in Homo sapiens (Human).